A 519-amino-acid chain; its full sequence is Glucose-1-phosphate adenylyltransferase large subunit 3, chloroplastic/amyloplastic (519 aa).

The N-terminal 74 residues, 1-74 (MQFSSVFPLE…DAGPDTLHVR (74 aa)), are a transit peptide targeting the chloroplast.

Belongs to the bacterial/plant glucose-1-phosphate adenylyltransferase family. In terms of assembly, heterotetramer composed of two small and two large subunits. As to expression, expressed in stems.

The protein localises to the plastid. It is found in the chloroplast. The enzyme catalyses alpha-D-glucose 1-phosphate + ATP + H(+) = ADP-alpha-D-glucose + diphosphate. Its pathway is glycan biosynthesis; starch biosynthesis. With respect to regulation, activated by 3'phosphoglycerate, inhibited by orthophosphate. Allosteric regulation. In terms of biological role, involved in synthesis of starch. Catalyzes the synthesis of ADP-glucose, a molecule that serves as an activated glycosyl donor for alpha-1,4-glucan synthesis. Essential for starch synthesis in leaf chloroplasts. The polypeptide is Glucose-1-phosphate adenylyltransferase large subunit 3, chloroplastic/amyloplastic (Oryza sativa subsp. japonica (Rice)).